A 728-amino-acid chain; its full sequence is Catalase B (728 aa).

Residues histidine 107 and asparagine 180 contribute to the active site. Position 394 (tyrosine 394) interacts with heme.

It belongs to the catalase family. Heme serves as cofactor.

It localises to the secreted. The catalysed reaction is 2 H2O2 = O2 + 2 H2O. Occurs in almost all aerobically respiring organisms and serves to protect cells from the toxic effects of hydrogen peroxide. This chain is Catalase B (CATB), found in Ajellomyces capsulatus (Darling's disease fungus).